Reading from the N-terminus, the 308-residue chain is 1,4-dihydroxy-2-naphthoate octaprenyltransferase (308 aa).

9 helical membrane passes run 22–42, 47–67, 101–121, 129–149, 153–173, 186–206, 235–255, 256–276, and 286–306; these read TLPL…WANP, GLVM…SNFA, WGLI…IGIA, FAFA…TVGV, GYMG…GVGG, IILP…INNL, ILLS…AISW, TNYL…FVYC, and ILAQ…LGLL.

The protein belongs to the MenA family. Type 1 subfamily.

Its subcellular location is the cell inner membrane. The catalysed reaction is an all-trans-polyprenyl diphosphate + 1,4-dihydroxy-2-naphthoate + H(+) = a 2-demethylmenaquinol + CO2 + diphosphate. It functions in the pathway quinol/quinone metabolism; menaquinone biosynthesis; menaquinol from 1,4-dihydroxy-2-naphthoate: step 1/2. Conversion of 1,4-dihydroxy-2-naphthoate (DHNA) to demethylmenaquinone (DMK). The polypeptide is 1,4-dihydroxy-2-naphthoate octaprenyltransferase (Haemophilus influenzae (strain ATCC 51907 / DSM 11121 / KW20 / Rd)).